We begin with the raw amino-acid sequence, 185 residues long: MISTNDFRTGLTIELDGEVYQVIEFQHVKPGKGSPFVRSKLRNLMTGAVIEKTFNAGEKVPKAHVDRREVQYLYNDGDNFYCMDMETYDQFPLTKEQFGDAINYVKENTNLWVLFFKDKVIGVELPNFVELKVIDTPPGIKGDTASGGSKPATLETGYVVQVPFFVEVGDVLQIDTRTGQYIKRV.

This sequence belongs to the elongation factor P family.

It localises to the cytoplasm. It functions in the pathway protein biosynthesis; polypeptide chain elongation. Involved in peptide bond synthesis. Stimulates efficient translation and peptide-bond synthesis on native or reconstituted 70S ribosomes in vitro. Probably functions indirectly by altering the affinity of the ribosome for aminoacyl-tRNA, thus increasing their reactivity as acceptors for peptidyl transferase. The sequence is that of Elongation factor P from Carboxydothermus hydrogenoformans (strain ATCC BAA-161 / DSM 6008 / Z-2901).